The chain runs to 333 residues: Phosphate acyltransferase (333 aa).

It belongs to the PlsX family. In terms of assembly, homodimer. Probably interacts with PlsY.

The protein resides in the cytoplasm. It carries out the reaction a fatty acyl-[ACP] + phosphate = an acyl phosphate + holo-[ACP]. Its pathway is lipid metabolism; phospholipid metabolism. In terms of biological role, catalyzes the reversible formation of acyl-phosphate (acyl-PO(4)) from acyl-[acyl-carrier-protein] (acyl-ACP). This enzyme utilizes acyl-ACP as fatty acyl donor, but not acyl-CoA. This Helicobacter hepaticus (strain ATCC 51449 / 3B1) protein is Phosphate acyltransferase.